The chain runs to 366 residues: Protein sigma-NS (366 aa).

Residues 1-11 (MASSLRAAISK) are important for ssRNA-binding and formation of complexes.

This sequence belongs to the orthoreovirus sigma-NS protein family. Homooligomer; in presence of RNA. Interacts with protein mu-NS; this interaction allows the localization of sigma-NS to the viral factories. Interacts with host G3BP1 (via C-terminus); this interaction induces the relocalization of G3BP1 and other SG proteins to the viral factories periphery.

The protein localises to the host cytoplasm. In terms of biological role, protein that binds to ssRNA and participates with protein mu-NS in forming the matrix of viral factories, which are large inclusions in the host cytoplasm where replication intermediates are assembled and viral RNA replication takes place. Plays a role in the inhibition of the integrated stress response (ISR) to escape from host cell translational shutoff. Participates in the disruption of stress granules (SG) through its association with host G3BP1 and mu-NS. This chain is Protein sigma-NS (S3), found in Mammalia (T1L).